The chain runs to 346 residues: Acrosin (346 aa).

An N-terminal signal peptide occupies residues 1–19; that stretch reads MALLLPLAVLLAACRPGHG. Cystine bridges form between cysteine 24/cysteine 146, cysteine 27/cysteine 154, cysteine 70/cysteine 86, cysteine 168/cysteine 240, cysteine 203/cysteine 219, and cysteine 230/cysteine 260. The region spanning 41 to 284 is the Peptidase S1 domain; that stretch reads VVGGTEALHG…FYNWILLQVR (244 aa). The active-site Charge relay system is the histidine 85. A glycan (N-linked (GlcNAc...) asparagine) is linked at asparagine 128. Aspartate 134 serves as the catalytic Charge relay system. Residue asparagine 204 is glycosylated (N-linked (GlcNAc...) asparagine). The active-site Charge relay system is the serine 234. A propeptide spanning residues 266-346 is cleaved from the precursor; that stretch reads PGIYTSTQHF…LLQSLWGSKA (81 aa).

Belongs to the peptidase S1 family. As to quaternary structure, heavy chain (catalytic) and a light chain linked by two disulfide bonds. Post-translationally, glycosylated.

The enzyme catalyses Preferential cleavage: Arg-|-Xaa, Lys-|-Xaa.. Inhibited by aprotinin, ovomucoid, soybean trypsin inhibitor, benzamidine, p-aminobenzamidine, and zinc ions. Activity also inhibited by a Kazal-type proteinase inhibitor. In terms of biological role, serine protease of trypsin-like cleavage specificity. Synthesized in a zymogen form, proacrosin and stored in the acrosome. This is Acrosin from Meleagris gallopavo (Wild turkey).